The primary structure comprises 576 residues: Epsin-1 (576 aa).

A 1,2-diacyl-sn-glycero-3-phospho-(1D-myo-inositol-4,5-bisphosphate) contacts are provided by Arg8, Lys11, Arg25, Asn30, Arg63, and His73. In terms of domain architecture, ENTH spans 12-144 (NIVHNYSEAE…RDEDRLREER (133 aa)). Positions 149 to 185 (KTKEKLAQTATASSAAVGSGPPPEAEQAWPQSSGEEE) are disordered. Over residues 157-167 (TATASSAAVGS) the composition is skewed to low complexity. 3 UIM domains span residues 183–202 (EEEL…ADQP), 208–227 (EDDA…HDKE), and 233–252 (GDDL…TGGK). Low complexity predominate over residues 265–296 (TAPAPAPTTDPWGGPAPMAAAVPTAAPTSDPW). The tract at residues 265-404 (TAPAPAPTTD…GGFDTEPDEF (140 aa)) is disordered. 8 repeat units span residues 274-276 (DPW), 294-296 (DPW), 306-308 (DPW), 319-321 (DPW), 332-334 (DPW), 349-351 (DPW), 367-369 (DPW), and 377-379 (DPW). The interval 274-379 (DPWGGPAPMA…TPAPAFSDPW (106 aa)) is 8 X 3 AA repeats of [ED]-P-W. Over residues 297–314 (GGPPVPPAADPWGGPAPT) the composition is skewed to pro residues. Positions 332 to 368 (DPWGGTPAPAAGEGPTPDPWGSSDGGVPVSGPSASDP) are enriched in low complexity. Ser382 is subject to Phosphoserine; by CDK1. The [DE]-X(1,2)-F-X-X-[FL]-X-X-X-R motif motif lies at 402–411 (DEFSDFDRLR). Residues Ser419, Ser420, Ser435, Ser447, and Ser454 each carry the phosphoserine modification. The disordered stretch occupies residues 448-576 (LAEAVGSPPP…PAPNTNPFLL (129 aa)). Residues 454–468 (SPPPAATPTPTPPTR) show a composition bias toward pro residues. Phosphothreonine is present on residues Thr460, Thr464, and Thr470. The residue at position 473 (Ser473) is a Phosphoserine. The residue at position 494 (Thr494) is a Phosphothreonine. 2 tandem repeats follow at residues 502–504 (NPF) and 518–520 (NPF). Positions 502 to 574 (NPFLPGGGPA…GPPAPNTNPF (73 aa)) are 3 X 3 AA repeats of N-P-F. The residue at position 534 (Arg534) is an Omega-N-methylarginine. The span at 557–570 (GLPPMMPPGPPAPN) shows a compositional bias: pro residues. The stretch at 572–574 (NPF) is repeat 3.

This sequence belongs to the epsin family. In terms of assembly, monomer. Binds clathrin, ZBTB16/ZNF145 and ITSN1. Binds ubiquitinated proteins. Binds AP2A1 and AP2A2. Interacts with RALBP1 in a complex also containing NUMB and TFAP2A during interphase and mitosis. Interacts with AP2B1. Interacts with UBQLN2. Interacts with REPS2; the interaction is direct. Interacts with EPS15; the interaction is direct. Interacts with ENTREP1. Phosphorylated on serine and/or threonine residues in mitotic cells. Phosphorylation reduces interaction with REPS2, AP-2 and the membrane fraction. Depolarization of synaptosomes results in dephosphorylation. Post-translationally, ubiquitinated.

The protein localises to the cytoplasm. It is found in the cell membrane. Its subcellular location is the nucleus. The protein resides in the membrane. It localises to the clathrin-coated pit. Binds to membranes enriched in phosphatidylinositol 4,5-bisphosphate (PtdIns(4,5)P2). Modifies membrane curvature and facilitates the formation of clathrin-coated invaginations. Regulates receptor-mediated endocytosis. The protein is Epsin-1 (EPN1) of Homo sapiens (Human).